Consider the following 179-residue polypeptide: Large ribosomal subunit protein uL5 (179 aa).

Belongs to the universal ribosomal protein uL5 family. In terms of assembly, part of the 50S ribosomal subunit; part of the 5S rRNA/L5/L18/L25 subcomplex. Contacts the 5S rRNA and the P site tRNA. Forms a bridge to the 30S subunit in the 70S ribosome.

Functionally, this is one of the proteins that bind and probably mediate the attachment of the 5S RNA into the large ribosomal subunit, where it forms part of the central protuberance. In the 70S ribosome it contacts protein S13 of the 30S subunit (bridge B1b), connecting the 2 subunits; this bridge is implicated in subunit movement. Contacts the P site tRNA; the 5S rRNA and some of its associated proteins might help stabilize positioning of ribosome-bound tRNAs. The polypeptide is Large ribosomal subunit protein uL5 (Prochlorococcus marinus (strain MIT 9313)).